Here is a 207-residue protein sequence, read N- to C-terminus: Ribosomal RNA large subunit methyltransferase E (207 aa).

5 residues coordinate S-adenosyl-L-methionine: glycine 60, tryptophan 62, aspartate 80, aspartate 96, and aspartate 121. Residue lysine 161 is the Proton acceptor of the active site.

The protein belongs to the class I-like SAM-binding methyltransferase superfamily. RNA methyltransferase RlmE family.

It localises to the cytoplasm. The enzyme catalyses uridine(2552) in 23S rRNA + S-adenosyl-L-methionine = 2'-O-methyluridine(2552) in 23S rRNA + S-adenosyl-L-homocysteine + H(+). In terms of biological role, specifically methylates the uridine in position 2552 of 23S rRNA at the 2'-O position of the ribose in the fully assembled 50S ribosomal subunit. The sequence is that of Ribosomal RNA large subunit methyltransferase E from Methylobacillus flagellatus (strain ATCC 51484 / DSM 6875 / VKM B-1610 / KT).